The primary structure comprises 150 residues: Ribosome maturation factor RimP (150 aa).

It belongs to the RimP family.

Its subcellular location is the cytoplasm. Functionally, required for maturation of 30S ribosomal subunits. This chain is Ribosome maturation factor RimP, found in Hahella chejuensis (strain KCTC 2396).